Reading from the N-terminus, the 260-residue chain is Thiazole synthase (260 aa).

The Schiff-base intermediate with DXP role is filled by Lys-96. Residues Gly-157, 184–185, and 206–207 contribute to the 1-deoxy-D-xylulose 5-phosphate site; these read AG and NT.

This sequence belongs to the ThiG family. In terms of assembly, homotetramer. Forms heterodimers with either ThiH or ThiS.

It localises to the cytoplasm. The enzyme catalyses [ThiS sulfur-carrier protein]-C-terminal-Gly-aminoethanethioate + 2-iminoacetate + 1-deoxy-D-xylulose 5-phosphate = [ThiS sulfur-carrier protein]-C-terminal Gly-Gly + 2-[(2R,5Z)-2-carboxy-4-methylthiazol-5(2H)-ylidene]ethyl phosphate + 2 H2O + H(+). The protein operates within cofactor biosynthesis; thiamine diphosphate biosynthesis. In terms of biological role, catalyzes the rearrangement of 1-deoxy-D-xylulose 5-phosphate (DXP) to produce the thiazole phosphate moiety of thiamine. Sulfur is provided by the thiocarboxylate moiety of the carrier protein ThiS. In vitro, sulfur can be provided by H(2)S. The protein is Thiazole synthase of Nitrobacter winogradskyi (strain ATCC 25391 / DSM 10237 / CIP 104748 / NCIMB 11846 / Nb-255).